The primary structure comprises 107 residues: U1-lycotoxin-Ls1l (107 aa).

Residues 1 to 20 form the signal peptide; it reads MMKVLVVVALLVTLISYSSS. Residues 21–41 constitute a propeptide that is removed on maturation; sequence EGIDDLEADELLSLMANEQTR. 4 disulfide bridges follow: Cys44–Cys59, Cys51–Cys68, Cys58–Cys86, and Cys70–Cys84.

Belongs to the neurotoxin 19 (CSTX) family. 04 (U1-Lctx) subfamily. Expressed by the venom gland.

Its subcellular location is the secreted. The polypeptide is U1-lycotoxin-Ls1l (Lycosa singoriensis (Wolf spider)).